Consider the following 350-residue polypeptide: Casein kinase II subunit alpha' (350 aa).

At tyrosine 13 the chain carries Phosphotyrosine. Phosphoserine is present on residues serine 18 and serine 21. The region spanning 40–325 is the Protein kinase domain; sequence YQLVRKLGRG…AKEAMEHPYF (286 aa). Residues 46-54 and lysine 69 each bind ATP; that span reads LGRGKYSEV. N6-acetyllysine is present on lysine 97. Aspartate 157 serves as the catalytic Proton acceptor. Serine 288 carries the post-translational modification Phosphoserine.

Belongs to the protein kinase superfamily. Ser/Thr protein kinase family. CK2 subfamily. Heterotetramer composed of two catalytic subunits (alpha chain and/or alpha' chain) and two regulatory subunits (beta chains). The tetramer can exist as a combination of 2 alpha/2 beta, 2 alpha'/2 beta or 1 alpha/1 alpha'/2 beta subunits. Also part of a CK2-SPT16-SSRP1 complex composed of SSRP1, SUPT16H, CSNK2A1, CSNK2A2 and CSNK2B, which forms following UV irradiation. Interacts with RNPS1. Interacts with CSNK2A2IP (via C-terminus). Interacts with SIRT6; preventing CSNK2A2 localization to the nucleus. Interacts with HIRIP3. In terms of tissue distribution, highly expressed in brain, testis and mature epididymal spermatozoa. Weakly expressed in kidney, liver, lung, spleen and thymus (at protein level).

It localises to the nucleus. The protein resides in the cytoplasm. It carries out the reaction L-seryl-[protein] + ATP = O-phospho-L-seryl-[protein] + ADP + H(+). The enzyme catalyses L-threonyl-[protein] + ATP = O-phospho-L-threonyl-[protein] + ADP + H(+). Constitutively active protein kinase whose activity is not directly affected by phosphorylation. Seems to be regulated by level of expression and localization. In terms of biological role, catalytic subunit of a constitutively active serine/threonine-protein kinase complex that phosphorylates a large number of substrates containing acidic residues C-terminal to the phosphorylated serine or threonine. Regulates numerous cellular processes, such as cell cycle progression, apoptosis and transcription, as well as viral infection. May act as a regulatory node which integrates and coordinates numerous signals leading to an appropriate cellular response. During mitosis, functions as a component of the p53/TP53-dependent spindle assembly checkpoint (SAC) that maintains cyclin-B-CDK1 activity and G2 arrest in response to spindle damage. Also required for p53/TP53-mediated apoptosis, phosphorylating 'Ser-392' of p53/TP53 following UV irradiation. Phosphorylates a number of DNA repair proteins in response to DNA damage, such as MDC1, RAD9A, RAD51 and HTATSF1, promoting their recruitment to DNA damage sites. Can also negatively regulate apoptosis. Phosphorylates the caspases CASP9 and CASP2 and the apoptotic regulator NOL3. Phosphorylation protects CASP9 from cleavage and activation by CASP8, and inhibits the dimerization of CASP2 and activation of CASP8. Regulates transcription by direct phosphorylation of RNA polymerases I, II, III and IV. Also phosphorylates and regulates numerous transcription factors including NF-kappa-B, STAT1, CREB1, IRF1, IRF2, ATF1, SRF, MAX, JUN, FOS, MYC and MYB. Phosphorylates Hsp90 and its co-chaperones FKBP4 and CDC37, which is essential for chaperone function. Regulates Wnt signaling by phosphorylating CTNNB1 and the transcription factor LEF1. Acts as an ectokinase that phosphorylates several extracellular proteins. May phosphorylate histone H2A on 'Ser-1'. In Mus musculus (Mouse), this protein is Casein kinase II subunit alpha' (Csnk2a2).